Consider the following 55-residue polypeptide: MFGWAITFLVIAIAAGIFGFAGLAGTAAWIAKVLFVVGLAAVLIMLVMGRRPPTV.

2 consecutive transmembrane segments (helical) span residues Met-1 to Ala-21 and Ala-28 to Met-48.

Belongs to the UPF0391 family.

It is found in the cell membrane. This Thiobacillus denitrificans (strain ATCC 25259 / T1) protein is UPF0391 membrane protein Tbd_2772.